We begin with the raw amino-acid sequence, 240 residues long: Small ribosomal subunit protein uS2c (240 aa).

This sequence belongs to the universal ribosomal protein uS2 family.

It localises to the plastid. Its subcellular location is the chloroplast. This Euglena gracilis protein is Small ribosomal subunit protein uS2c (rps2).